We begin with the raw amino-acid sequence, 337 residues long: Tryptophan--tRNA ligase 2 (337 aa).

ATP is bound by residues 13–15 and 22–23; these read QPT and GN. Residues 14–23 carry the 'HIGH' region motif; sequence PTAGSFHLGN. An L-tryptophan-binding site is contributed by D139. ATP-binding positions include 151–153, I190, and 199–203; these read GED and KMSKS. The 'KMSKS' region motif lies at 199–203; sequence KMSKS.

This sequence belongs to the class-I aminoacyl-tRNA synthetase family. Homodimer.

The protein resides in the cytoplasm. The catalysed reaction is tRNA(Trp) + L-tryptophan + ATP = L-tryptophyl-tRNA(Trp) + AMP + diphosphate + H(+). Functionally, catalyzes the attachment of tryptophan to tRNA(Trp). The sequence is that of Tryptophan--tRNA ligase 2 from Streptomyces avermitilis (strain ATCC 31267 / DSM 46492 / JCM 5070 / NBRC 14893 / NCIMB 12804 / NRRL 8165 / MA-4680).